A 76-amino-acid chain; its full sequence is Exodeoxyribonuclease 7 small subunit (76 aa).

Belongs to the XseB family. In terms of assembly, heterooligomer composed of large and small subunits.

The protein resides in the cytoplasm. The enzyme catalyses Exonucleolytic cleavage in either 5'- to 3'- or 3'- to 5'-direction to yield nucleoside 5'-phosphates.. Functionally, bidirectionally degrades single-stranded DNA into large acid-insoluble oligonucleotides, which are then degraded further into small acid-soluble oligonucleotides. In Bacillus cereus (strain ATCC 14579 / DSM 31 / CCUG 7414 / JCM 2152 / NBRC 15305 / NCIMB 9373 / NCTC 2599 / NRRL B-3711), this protein is Exodeoxyribonuclease 7 small subunit.